A 508-amino-acid chain; its full sequence is Lysine--tRNA ligase (508 aa).

E418 and E425 together coordinate Mg(2+).

The protein belongs to the class-II aminoacyl-tRNA synthetase family. As to quaternary structure, homodimer. Mg(2+) serves as cofactor.

The protein localises to the cytoplasm. It carries out the reaction tRNA(Lys) + L-lysine + ATP = L-lysyl-tRNA(Lys) + AMP + diphosphate. The polypeptide is Lysine--tRNA ligase (Burkholderia cenocepacia (strain HI2424)).